We begin with the raw amino-acid sequence, 355 residues long: MENNNYNNHVSGENSGGQRGHFFYGGNQVLGGAAPIYGRGGDCYDPMIVKTEGGGSTSHHNHTFHYPSIIRNHHHDSTETSGGGAGAGEVIEALKAKIIAHPQCSNLLDAYMDCQKVGAPPEVAARLSAVRQEFEARQRRSLTDRDVSKDPELDQFMEAYYDMLVKYREELTRPLQEAMEFMQKIEAQLNMLGNAPVRIFNSEDKCEGVGSSEEDQDNSGGETELPEIDPRAEDRELKNHLLRKYSGYLSSLKQELSKKKKKGKLPKDARQKLITWWELHYKWPYPSESEKVALAESTGLDQKQINNWFINQRKRHWKPSEDMQFMVMDGLHPQSAAALYMEGHYMGEGPFRLGQ.

The tract at residues 205–233 (KCEGVGSSEEDQDNSGGETELPEIDPRAE) is disordered. The 21-residue stretch at 236–256 (ELKNHLLRKYSGYLSSLKQEL) folds into the ELK domain. Positions 257-320 (SKKKKKGKLP…NQRKRHWKPS (64 aa)) form a DNA-binding region, homeobox; TALE-type.

Belongs to the TALE/KNOX homeobox family. Expressed in the apical meristems, in the newly emerged lateral primordia in the floral bud, in their vascular bundles and in the cortex parenchyma of the floral pedicle. Also present in the lateral tips of leaf primordia.

It is found in the nucleus. Functionally, appears to be involved in meristem formation and in the regulation of leaf morphology. Misexpression makes the leaf more compound which is always associated with growth retardation and loss of apical dominance, resulting in dwarfed, bushy plants. Probably binds to the DNA sequence 5'-TGAC-3'. The polypeptide is Homeotic protein knotted-1 (KN1) (Solanum lycopersicum (Tomato)).